The following is a 451-amino-acid chain: AAA-ATPase At3g28570, mitochondrial (451 aa).

The N-terminal 48 residues, 1–48 (MFAENLTRIGSNVAGLFFVWSTLKRYFPRQIQQLLFNAIQRIPIFKRL), are a transit peptide targeting the mitochondrion. Residue 243–250 (GPPGTGKS) coordinates ATP.

The protein belongs to the AAA ATPase family. BCS1 subfamily. It depends on Mg(2+) as a cofactor.

It is found in the mitochondrion. It catalyses the reaction ATP + H2O = ADP + phosphate + H(+). The protein is AAA-ATPase At3g28570, mitochondrial of Arabidopsis thaliana (Mouse-ear cress).